The following is a 319-amino-acid chain: Probable alcohol dehydrogenase (319 aa).

Positions 18, 39, 68, 71, 74, 82, and 149 each coordinate Zn(2+).

This sequence belongs to the zinc-containing alcohol dehydrogenase family. Requires Zn(2+) as cofactor.

It catalyses the reaction a primary alcohol + NAD(+) = an aldehyde + NADH + H(+). The catalysed reaction is a secondary alcohol + NAD(+) = a ketone + NADH + H(+). The sequence is that of Probable alcohol dehydrogenase (terPD) from Pseudomonas sp.